A 369-amino-acid chain; its full sequence is Phospho-N-acetylmuramoyl-pentapeptide-transferase (369 aa).

A run of 10 helical transmembrane segments spans residues 2–22 (IPLL…TQLF), 55–75 (AVVI…SWWI), 82–102 (PSVS…VGFL), 120–140 (AKLI…INFA), 163–183 (LAFA…NLII), 196–216 (LDGL…LIGI), 240–260 (PLDL…FLWW), 267–287 (IFMG…FAIL), 292–312 (ILLA…ILQV), and 349–369 (ILGG…WVVF).

The protein belongs to the glycosyltransferase 4 family. MraY subfamily. Mg(2+) serves as cofactor.

The protein localises to the cell membrane. It catalyses the reaction UDP-N-acetyl-alpha-D-muramoyl-L-alanyl-gamma-D-glutamyl-meso-2,6-diaminopimeloyl-D-alanyl-D-alanine + di-trans,octa-cis-undecaprenyl phosphate = di-trans,octa-cis-undecaprenyl diphospho-N-acetyl-alpha-D-muramoyl-L-alanyl-D-glutamyl-meso-2,6-diaminopimeloyl-D-alanyl-D-alanine + UMP. It participates in cell wall biogenesis; peptidoglycan biosynthesis. Functionally, catalyzes the initial step of the lipid cycle reactions in the biosynthesis of the cell wall peptidoglycan: transfers peptidoglycan precursor phospho-MurNAc-pentapeptide from UDP-MurNAc-pentapeptide onto the lipid carrier undecaprenyl phosphate, yielding undecaprenyl-pyrophosphoryl-MurNAc-pentapeptide, known as lipid I. This Renibacterium salmoninarum (strain ATCC 33209 / DSM 20767 / JCM 11484 / NBRC 15589 / NCIMB 2235) protein is Phospho-N-acetylmuramoyl-pentapeptide-transferase.